The chain runs to 254 residues: Alcohol dehydrogenase 1 (254 aa).

10–33 (FVAGLGGIGFDTSREIVKSGPKNL) lines the NAD(+) pocket. Ser-138 contacts substrate. Catalysis depends on Tyr-151, which acts as the Proton acceptor.

It belongs to the short-chain dehydrogenases/reductases (SDR) family. As to quaternary structure, homodimer.

The catalysed reaction is a primary alcohol + NAD(+) = an aldehyde + NADH + H(+). It carries out the reaction a secondary alcohol + NAD(+) = a ketone + NADH + H(+). The protein is Alcohol dehydrogenase 1 (Adh1) of Drosophila navojoa (Fruit fly).